The primary structure comprises 317 residues: 17-beta-hydroxysteroid dehydrogenase type 6 (317 aa).

An N-terminal signal peptide occupies residues 1–17 (MWLYLAAFVGLYYLLHW). Residue 33-57 (FITGCDSGFGNLLARQLDARGLRVL) coordinates NAD(+). A glycan (N-linked (GlcNAc...) asparagine) is linked at N161. S164 provides a ligand contact to substrate. The active-site Proton acceptor is Y176. N-linked (GlcNAc...) asparagine glycans are attached at residues N215 and N256.

Belongs to the short-chain dehydrogenases/reductases (SDR) family. As to expression, detected in liver and prostate (at protein level). Detected in adult liver, lung, brain, placenta, prostate, adrenal gland, testis, mammary gland, spleen, spinal cord and uterus. Detected in caudate nucleus, and at lower levels in amygdala, corpus callosum, hippocampus, substantia nigra and thalamus. Detected in fetal lung, liver and brain.

The protein localises to the microsome membrane. It is found in the early endosome membrane. The enzyme catalyses all-trans-retinol--[retinol-binding protein] + NAD(+) = all-trans-retinal--[retinol-binding protein] + NADH + H(+). It catalyses the reaction all-trans-retinol + NAD(+) = all-trans-retinal + NADH + H(+). The catalysed reaction is androsterone + NAD(+) = 5alpha-androstan-3,17-dione + NADH + H(+). It carries out the reaction testosterone + NAD(+) = androst-4-ene-3,17-dione + NADH + H(+). The enzyme catalyses 5alpha-androstane-3alpha,17beta-diol + NAD(+) = 17beta-hydroxy-5alpha-androstan-3-one + NADH + H(+). It catalyses the reaction 17beta-estradiol + NAD(+) = estrone + NADH + H(+). The catalysed reaction is 17beta-estradiol + NADP(+) = estrone + NADPH + H(+). It carries out the reaction 3alpha-hydroxy-5alpha-pregnan-20-one + NAD(+) = 5alpha-pregnane-3,20-dione + NADH + H(+). The enzyme catalyses 5alpha-androstane-3beta,17beta-diol + NAD(+) = 17beta-hydroxy-5alpha-androstan-3-one + NADH + H(+). It catalyses the reaction 3beta-hydroxy-5alpha-androstan-17-one + NAD(+) = 5alpha-androstan-3,17-dione + NADH + H(+). Its function is as follows. NAD-dependent oxidoreductase with broad substrate specificity that shows both oxidative and reductive activity (in vitro). Has 17-beta-hydroxysteroid dehydrogenase activity towards various steroids (in vitro). Converts 5-alpha-androstan-3-alpha,17-beta-diol to androsterone and estradiol to estrone (in vitro). Has 3-alpha-hydroxysteroid dehydrogenase activity towards androsterone (in vitro). Has retinol dehydrogenase activity towards all-trans-retinol (in vitro). Can convert androsterone to epi-androsterone. Androsterone is first oxidized to 5-alpha-androstane-3,17-dione and then reduced to epi-andosterone. Can act on both C-19 and C-21 3-alpha-hydroxysteroids. The protein is 17-beta-hydroxysteroid dehydrogenase type 6 (HSD17B6) of Homo sapiens (Human).